A 150-amino-acid polypeptide reads, in one-letter code: UPF0098 protein TC_0109 (150 aa).

It belongs to the UPF0098 family.

This is UPF0098 protein TC_0109 from Chlamydia muridarum (strain MoPn / Nigg).